The primary structure comprises 147 residues: Large ribosomal subunit protein uL15 (147 aa).

Over residues 1–28 (MIRRRKKVRKLRGSHTHGWGCKKKHRGG) the composition is skewed to basic residues. The tract at residues 1–43 (MIRRRKKVRKLRGSHTHGWGCKKKHRGGGSKGGRGMAGTGKRN) is disordered. Residues 29–38 (GSKGGRGMAG) are compositionally biased toward gly residues.

The protein belongs to the universal ribosomal protein uL15 family. As to quaternary structure, part of the 50S ribosomal subunit.

Its function is as follows. Binds to the 23S rRNA. The protein is Large ribosomal subunit protein uL15 of Pyrococcus furiosus (strain ATCC 43587 / DSM 3638 / JCM 8422 / Vc1).